The sequence spans 45 residues: MEDVVRIVVEGEKVKMWDILGDYREVRGRVVEMDLVGHKIILEGE.

This is an uncharacterized protein from Archaeoglobus fulgidus (strain ATCC 49558 / DSM 4304 / JCM 9628 / NBRC 100126 / VC-16).